Reading from the N-terminus, the 312-residue chain is Olfactory receptor 10C1 (312 aa).

The Extracellular portion of the chain corresponds to 1 to 24; it reads MSANTSMVTEFLLLGFSHLADLQG. Asparagine 4 carries an N-linked (GlcNAc...) asparagine glycan. A helical transmembrane segment spans residues 25–45; sequence LLFSVFLTIYLLTVAGNFLIV. The Cytoplasmic segment spans residues 46–53; it reads VLVSTDAA. A helical transmembrane segment spans residues 54-74; sequence LQSPMYFFLRTLSALEIGYTS. Topologically, residues 75-98 are extracellular; sequence VTVPLLLHHLLTGRRHISRSGCAL. Cysteine 96 and cysteine 188 are oxidised to a cystine. Residues 99 to 119 traverse the membrane as a helical segment; the sequence is QMFFFLFFGATECCLLAAMAY. Residues 120-138 lie on the Cytoplasmic side of the membrane; the sequence is DRYAAICEPLRYPLLLSHR. A helical transmembrane segment spans residues 139–159; sequence VCLQLAGSAWACGVLVGLGHT. Residues 160–196 lie on the Extracellular side of the membrane; sequence PFIFSLPFCGPNTIPQFFCEIQPVLQLVCGDTSLNEL. Residues 197–216 form a helical membrane-spanning segment; the sequence is QIILATALLILCPFGLILGS. Residues 217–236 lie on the Cytoplasmic side of the membrane; sequence YGRILVTIFRIPSVAGRRKA. A helical membrane pass occupies residues 237 to 257; the sequence is FSTCSSHLIMVSLFYGTALFI. Topologically, residues 258 to 270 are extracellular; that stretch reads YIRPKASYDPATD. The helical transmembrane segment at 271-291 threads the bilayer; that stretch reads PLVSLFYAVVTPILNPIIYSL. At 292–312 the chain is on the cytoplasmic side; that stretch reads RNTEVKAALKRTIQKTVPMEI.

The protein belongs to the G-protein coupled receptor 1 family.

The protein resides in the cell membrane. Odorant receptor. The sequence is that of Olfactory receptor 10C1 (OR10C1) from Homo sapiens (Human).